The sequence spans 271 residues: tRNA pseudouridine synthase A (271 aa).

The active-site Nucleophile is the Asp56. Tyr120 lines the substrate pocket.

It belongs to the tRNA pseudouridine synthase TruA family. As to quaternary structure, homodimer.

The catalysed reaction is uridine(38/39/40) in tRNA = pseudouridine(38/39/40) in tRNA. Its function is as follows. Formation of pseudouridine at positions 38, 39 and 40 in the anticodon stem and loop of transfer RNAs. This is tRNA pseudouridine synthase A from Janthinobacterium sp. (strain Marseille) (Minibacterium massiliensis).